The following is a 719-amino-acid chain: Pesticidal crystal protein Cry1Id (719 aa).

Belongs to the delta endotoxin family.

Promotes colloidosmotic lysis by binding to the midgut epithelial cells of many lepidopteran larvae. Active on Plutella xylostella and on Bombyx mori. In Bacillus thuringiensis, this protein is Pesticidal crystal protein Cry1Id (cry1Id).